The chain runs to 512 residues: Protein OS-9 homolog (512 aa).

Residues 1 to 17 (MRRFNLILLASLQLVGA) form the signal peptide. The segment at 71–91 (QAREADARDNEAENKDQDGPS) is disordered. A compositionally biased stretch (basic and acidic residues) spans 73-88 (READARDNEAENKDQD). Asparagine 118 is a glycosylation site (N-linked (GlcNAc...) asparagine). One can recognise an MRH domain in the interval 149–288 (DSCLYFMSGW…VVNTPRLCND (140 aa)). A disulfide bond links cysteine 151 and cysteine 164. Residues tryptophan 158, tryptophan 159, glutamine 171, aspartate 242, arginine 248, glutamate 270, and tyrosine 276 each coordinate a mannooligosaccharide derivative. 2 disulfides stabilise this stretch: cysteine 241–cysteine 274 and cysteine 256–cysteine 286. Disordered stretches follow at residues 329 to 349 (QVPL…PRDV) and 485 to 512 (AAAK…KDEL). Positions 492–504 (DDEEEVVEGSEEQ) are enriched in acidic residues. The Prevents secretion from ER motif lies at 509–512 (KDEL).

It belongs to the OS-9 family. Interacts with missfolded ER lumenal proteins.

The protein localises to the endoplasmic reticulum membrane. Functionally, lectin involved in the quality control of the secretory pathway. As a member of the endoplasmic reticulum-associated degradation lumenal (ERAD-L) surveillance system, targets misfolded endoplasmic reticulum lumenal glycoproteins for degradation. The sequence is that of Protein OS-9 homolog (YOS1) from Gibberella zeae (strain ATCC MYA-4620 / CBS 123657 / FGSC 9075 / NRRL 31084 / PH-1) (Wheat head blight fungus).